The sequence spans 494 residues: Protein nucleotidyltransferase YdiU (494 aa).

Residues Gly-90, Gly-92, Arg-93, Lys-113, Asp-125, Gly-126, Arg-176, and Arg-183 each coordinate ATP. Catalysis depends on Asp-252, which acts as the Proton acceptor. Residues Asn-253 and Asp-262 each coordinate Mg(2+). Position 262 (Asp-262) interacts with ATP.

This sequence belongs to the SELO family. Mg(2+) serves as cofactor. It depends on Mn(2+) as a cofactor.

It carries out the reaction L-seryl-[protein] + ATP = 3-O-(5'-adenylyl)-L-seryl-[protein] + diphosphate. The catalysed reaction is L-threonyl-[protein] + ATP = 3-O-(5'-adenylyl)-L-threonyl-[protein] + diphosphate. It catalyses the reaction L-tyrosyl-[protein] + ATP = O-(5'-adenylyl)-L-tyrosyl-[protein] + diphosphate. The enzyme catalyses L-histidyl-[protein] + UTP = N(tele)-(5'-uridylyl)-L-histidyl-[protein] + diphosphate. It carries out the reaction L-seryl-[protein] + UTP = O-(5'-uridylyl)-L-seryl-[protein] + diphosphate. The catalysed reaction is L-tyrosyl-[protein] + UTP = O-(5'-uridylyl)-L-tyrosyl-[protein] + diphosphate. Nucleotidyltransferase involved in the post-translational modification of proteins. It can catalyze the addition of adenosine monophosphate (AMP) or uridine monophosphate (UMP) to a protein, resulting in modifications known as AMPylation and UMPylation. This is Protein nucleotidyltransferase YdiU from Alkalilimnicola ehrlichii (strain ATCC BAA-1101 / DSM 17681 / MLHE-1).